Consider the following 195-residue polypeptide: Interferon tau-1 (195 aa).

Positions 1–23 (MAFVLSLLMALVLVSYGPGRSLG) are cleaved as a signal peptide. 2 disulfide bridges follow: cysteine 24–cysteine 122 and cysteine 52–cysteine 162. Asparagine 101 is a glycosylation site (N-linked (GlcNAc...) asparagine).

The protein belongs to the alpha/beta interferon family. IFN-alphaII subfamily. In terms of tissue distribution, constitutively and exclusively expressed in the mononuclear cells of the extraembryonic trophectoderm.

It is found in the secreted. Paracrine hormone primarily responsible for maternal recognition of pregnancy. Interacts with endometrial receptors, probably type I interferon receptors, and blocks estrogen receptor expression, preventing the estrogen-induced increase in oxytocin receptor expression in the endometrium. This results in the suppression of the pulsatile endometrial release of the luteolytic hormone prostaglandin F2-alpha, hindering the regression of the corpus luteum (luteolysis) and therefore a return to ovarian cyclicity. This, and a possible direct effect of IFN-tau on prostaglandin synthesis, leads in turn to continued ovarian progesterone secretion, which stimulates the secretion by the endometrium of the nutrients required for the growth of the conceptus. In summary, displays particularly high antiviral and antiproliferative potency concurrently with particular weak cytotoxicity, high antiluteolytic activity and immunomodulatory properties. In contrast with other IFNs, IFN-tau is not virally inducible. This Bos taurus (Bovine) protein is Interferon tau-1 (IFNT1).